Reading from the N-terminus, the 202-residue chain is Glycerol-3-phosphate acyltransferase (202 aa).

6 helical membrane-spanning segments follow: residues 3-23 (NLII…LILA), 61-81 (IATI…LKFL), 87-107 (LLWS…YLLF), 118-138 (GAMI…WVVI), 144-164 (ISSL…FIFN), and 167-187 (LEIH…YKHL).

This sequence belongs to the PlsY family. In terms of assembly, probably interacts with PlsX.

The protein resides in the cell inner membrane. It catalyses the reaction an acyl phosphate + sn-glycerol 3-phosphate = a 1-acyl-sn-glycero-3-phosphate + phosphate. It participates in lipid metabolism; phospholipid metabolism. Its function is as follows. Catalyzes the transfer of an acyl group from acyl-phosphate (acyl-PO(4)) to glycerol-3-phosphate (G3P) to form lysophosphatidic acid (LPA). This enzyme utilizes acyl-phosphate as fatty acyl donor, but not acyl-CoA or acyl-ACP. This is Glycerol-3-phosphate acyltransferase from Campylobacter jejuni subsp. jejuni serotype O:23/36 (strain 81-176).